The sequence spans 436 residues: Glutamyl-tRNA reductase 2 (436 aa).

Substrate is bound by residues 49–52 (TCNR), Ser-106, 111–113 (EPQ), and Gln-117. The active-site Nucleophile is Cys-50. 186 to 191 (GAGKMC) provides a ligand contact to NADP(+).

The protein belongs to the glutamyl-tRNA reductase family. In terms of assembly, homodimer.

It carries out the reaction (S)-4-amino-5-oxopentanoate + tRNA(Glu) + NADP(+) = L-glutamyl-tRNA(Glu) + NADPH + H(+). It functions in the pathway porphyrin-containing compound metabolism; protoporphyrin-IX biosynthesis; 5-aminolevulinate from L-glutamyl-tRNA(Glu): step 1/2. Its function is as follows. Catalyzes the NADPH-dependent reduction of glutamyl-tRNA(Glu) to glutamate 1-semialdehyde (GSA). In Koribacter versatilis (strain Ellin345), this protein is Glutamyl-tRNA reductase 2.